Here is a 197-residue protein sequence, read N- to C-terminus: NADH-quinone oxidoreductase subunit B (197 aa).

The [4Fe-4S] cluster site is built by Cys63, Cys64, Cys129, and Cys159.

This sequence belongs to the complex I 20 kDa subunit family. As to quaternary structure, NDH-1 is composed of 14 different subunits. Subunits NuoB, C, D, E, F, and G constitute the peripheral sector of the complex. The cofactor is [4Fe-4S] cluster.

It localises to the cell inner membrane. The enzyme catalyses a quinone + NADH + 5 H(+)(in) = a quinol + NAD(+) + 4 H(+)(out). NDH-1 shuttles electrons from NADH, via FMN and iron-sulfur (Fe-S) centers, to quinones in the respiratory chain. The immediate electron acceptor for the enzyme in this species is believed to be a menaquinone. Couples the redox reaction to proton translocation (for every two electrons transferred, four hydrogen ions are translocated across the cytoplasmic membrane), and thus conserves the redox energy in a proton gradient. This Bacteroides thetaiotaomicron (strain ATCC 29148 / DSM 2079 / JCM 5827 / CCUG 10774 / NCTC 10582 / VPI-5482 / E50) protein is NADH-quinone oxidoreductase subunit B.